The chain runs to 201 residues: Small ribosomal subunit protein uS4c (201 aa).

The region spanning 89–150 is the S4 RNA-binding domain; sequence MRLDNILFRL…KQRSKVLIQN (62 aa).

The protein belongs to the universal ribosomal protein uS4 family. As to quaternary structure, part of the 30S ribosomal subunit. Contacts protein S5. The interaction surface between S4 and S5 is involved in control of translational fidelity.

It is found in the plastid. The protein resides in the chloroplast. In terms of biological role, one of the primary rRNA binding proteins, it binds directly to 16S rRNA where it nucleates assembly of the body of the 30S subunit. Functionally, with S5 and S12 plays an important role in translational accuracy. The polypeptide is Small ribosomal subunit protein uS4c (rps4) (Acorus calamus (Sweet flag)).